The sequence spans 577 residues: Proline--tRNA ligase (577 aa).

It belongs to the class-II aminoacyl-tRNA synthetase family. ProS type 1 subfamily. In terms of assembly, homodimer.

The protein localises to the cytoplasm. The catalysed reaction is tRNA(Pro) + L-proline + ATP = L-prolyl-tRNA(Pro) + AMP + diphosphate. Functionally, catalyzes the attachment of proline to tRNA(Pro) in a two-step reaction: proline is first activated by ATP to form Pro-AMP and then transferred to the acceptor end of tRNA(Pro). As ProRS can inadvertently accommodate and process non-cognate amino acids such as alanine and cysteine, to avoid such errors it has two additional distinct editing activities against alanine. One activity is designated as 'pretransfer' editing and involves the tRNA(Pro)-independent hydrolysis of activated Ala-AMP. The other activity is designated 'posttransfer' editing and involves deacylation of mischarged Ala-tRNA(Pro). The misacylated Cys-tRNA(Pro) is not edited by ProRS. In Janthinobacterium sp. (strain Marseille) (Minibacterium massiliensis), this protein is Proline--tRNA ligase.